Reading from the N-terminus, the 431-residue chain is MSVLSLKPRAGADDVDALMREIGRRARAASRRMALVPARAKDMALRAAAAAIRDAAPVILEANAADLAEARGANLPAATLDRLALTPGRVEAIAAAVEAIAGLPDPVGRQLAAFERPNGLAIERISTPLGVVGVIYESRPNVTADAGALCLKAGNAAVLRAGSESLRSAAAIARAMADGLAAQGLPAEAIQLVPTRDRAAVGAMLAGLDGCIDVIVPRGGKSLVARVQSEARVPVFAHLEGICHVFVHARADLAMAREILRNSKLRRTGICGAAETLLVDRACAGTHLAPLVADLLEAGCAVRGDAETQAVDPRVTPATEADWRTEYLDAVIAVRVVDGLDAAIDHVETYGSHHTDAIVTADEAAAERFLAEVDSAIVVHNASTQFADGGEFGFGAEIGIATGRMHARGPVGVEQLTTFKYRVHGSGQVRP.

The protein belongs to the gamma-glutamyl phosphate reductase family.

It is found in the cytoplasm. It catalyses the reaction L-glutamate 5-semialdehyde + phosphate + NADP(+) = L-glutamyl 5-phosphate + NADPH + H(+). The protein operates within amino-acid biosynthesis; L-proline biosynthesis; L-glutamate 5-semialdehyde from L-glutamate: step 2/2. Its function is as follows. Catalyzes the NADPH-dependent reduction of L-glutamate 5-phosphate into L-glutamate 5-semialdehyde and phosphate. The product spontaneously undergoes cyclization to form 1-pyrroline-5-carboxylate. This is Gamma-glutamyl phosphate reductase from Methylobacterium sp. (strain 4-46).